The sequence spans 194 residues: Probable transcription factor At4g00130 (194 aa).

Belongs to the GeBP family.

This chain is Probable transcription factor At4g00130, found in Arabidopsis thaliana (Mouse-ear cress).